Consider the following 2581-residue polypeptide: Highly reducing polyketide synthase sorA (2581 aa).

A Ketosynthase family 3 (KS3) domain is found at 14–436; sequence SEPIAIIGMS…GSNAHIILED (423 aa). Catalysis depends on for beta-ketoacyl synthase activity residues cysteine 187, histidine 322, and histidine 359. Residues 574-868 form a malonyl-CoA:ACP transacylase (MAT) domain region; sequence VFTGQGAQWN…VVEVGPHTAL (295 aa). The segment at 966 to 1103 is N-terminal hotdog fold; that stretch reads HDLLGSIVEG…GLVSVELGES (138 aa). The interval 966-1270 is dehydratase (DH) domain; that stretch reads HDLLGSIVEG…GFSYQSLGRS (305 aa). One can recognise a PKS/mFAS DH domain in the interval 966–1273; the sequence is HDLLGSIVEG…YQSLGRSTSL (308 aa). Histidine 998 functions as the Proton acceptor; for dehydratase activity in the catalytic mechanism. The tract at residues 1119–1273 is C-terminal hotdog fold; sequence TRRILPADLF…YQSLGRSTSL (155 aa). Catalysis depends on aspartate 1184, which acts as the Proton donor; for dehydratase activity. Residues 1461–1568 are methyltransferase (CMet) domain; the sequence is LEVGAATGAI…SSLLKPGGTL (108 aa). Positions 1873-2184 are enoyl reductase (ER)domain; that stretch reads LKPDLLVFGD…AGDQIGKVVL (312 aa). Residues 2207 to 2389 are ketoreductase (KR) domain; it reads VSYLIVGGSG…AVSIDLSVVN (183 aa). The Carrier domain occupies 2497-2574; the sequence is DAVRVVGTAI…QLAIDVVDRS (78 aa). Serine 2534 is subject to O-(pantetheine 4'-phosphoryl)serine.

It participates in secondary metabolite biosynthesis. In terms of biological role, highly reducing polyketide synthase; part of the gene cluster that mediates the biosynthesis of sorbicillinoids, a diverse group of yellow secondary metabolites that restrict growth of competing pathogenic fungi but not of bacteria. Sorbicillinoids biosynthesis requires the action of two PKSs. SorA iteratively combines three acetyl units and the growing chain is modified by the ketoacyl reductase subunit, and optional by the enoyl reductase subunit in the second cycle. The polyketide is then handed over to the PKS SorB, which adds three more acetyl units, and two methyl groups. SorB releases an aldehyde, which undergoes spontaneous cyclization resulting in the formation of sorbicillin or 2',3'-dihydrosorbicillin. The monooxygenase sorC oxidizes sorbicillin and 2',3'-dihydrosorbicillin to 2',3'-dihydrosorbicillinol and sorbicillinol, respectively. The oxidoreductase sorD further converts sorbicillinol into oxosorbicillinol. Sorbicillinol is the building block for the other sorbicillinoids such as disorbicillinol, bisvertinolon, and dihydrobisvertinolone. The protein is Highly reducing polyketide synthase sorA of Penicillium rubens (strain ATCC 28089 / DSM 1075 / NRRL 1951 / Wisconsin 54-1255) (Penicillium chrysogenum).